Here is a 92-residue protein sequence, read N- to C-terminus: Small ribosomal subunit protein uS15c (92 aa).

The protein belongs to the universal ribosomal protein uS15 family. Part of the 30S ribosomal subunit.

Its subcellular location is the plastid. It is found in the chloroplast. This is Small ribosomal subunit protein uS15c (rps15) from Guizotia abyssinica (Niger).